Here is a 69-residue protein sequence, read N- to C-terminus: Putative membrane protein insertion efficiency factor (69 aa).

The protein belongs to the UPF0161 family.

It is found in the cell membrane. In terms of biological role, could be involved in insertion of integral membrane proteins into the membrane. The protein is Putative membrane protein insertion efficiency factor of Clostridium beijerinckii (strain ATCC 51743 / NCIMB 8052) (Clostridium acetobutylicum).